The chain runs to 456 residues: Carnosine N-methyltransferase unmet (456 aa).

Positions 154, 195, 216, 282, 283, and 299 each coordinate S-adenosyl-L-methionine. Carnosine contacts are provided by Asp-303, His-334, and Tyr-385. A compositionally biased stretch (basic and acidic residues) spans 402–418; the sequence is RGKRKASREPHDLIVRE. The interval 402–456 is disordered; that stretch reads RGKRKASREPHDLIVREDSEEEGEQQPERNETEEKQQLKPLATANCETEIKEQPS. Residues Ser-408 and Ser-420 each carry the phosphoserine modification. Residues 427–438 are compositionally biased toward basic and acidic residues; that stretch reads QPERNETEEKQQ.

It belongs to the carnosine N-methyltransferase family. In terms of assembly, associates with the GATOR2 complex; the interaction is probably direct and is inhibited by S-adenosyl-L-methionine binding. Associates with the GATOR1 complex; the interaction is probably indirect and mediated by the GATOR2 complex.

The catalysed reaction is carnosine + S-adenosyl-L-methionine = anserine + S-adenosyl-L-homocysteine + H(+). S-adenosyl-L-methionine-binding protein that acts as a sensor to signal methionine availability to the mTORC1 signaling pathway. Associates with the GATOR2 complex in the absence of methionine to inhibit mTORC1 signaling, but dissociates in the presence of the methionine derivative S-adenosyl-L-methionine; S-adenosyl-L-homocysteine binding does not induce dissociation. Required for mTORC1 pathway response to methionine starvation. Exerts a protective function on developing egg chambers by inhibiting mTORC1 signaling under starvation conditions. May also function as a N-methyltransferase that mediates the formation of anserine (beta-alanyl-N(Pi)-methyl-L-histidine) from carnosine. It is unclear whether this protein has retained N-methyltransferase activity or if it is an evolutionary intermediate whose substrate binding ability has been co-opted to function as a nutrient sensor for mTORC1 signaling. This Drosophila melanogaster (Fruit fly) protein is Carnosine N-methyltransferase unmet.